Consider the following 561-residue polypeptide: Glutamate--tRNA ligase (561 aa).

The 'HIGH' region motif lies at 107–117 (PNPSGPLHLGH).

This sequence belongs to the class-I aminoacyl-tRNA synthetase family. Glutamate--tRNA ligase type 2 subfamily.

The protein localises to the cytoplasm. The catalysed reaction is tRNA(Glu) + L-glutamate + ATP = L-glutamyl-tRNA(Glu) + AMP + diphosphate. Its function is as follows. Catalyzes the attachment of glutamate to tRNA(Glu) in a two-step reaction: glutamate is first activated by ATP to form Glu-AMP and then transferred to the acceptor end of tRNA(Glu). In Methanoculleus marisnigri (strain ATCC 35101 / DSM 1498 / JR1), this protein is Glutamate--tRNA ligase.